A 556-amino-acid polypeptide reads, in one-letter code: Testis-specific protein 10-interacting protein (556 aa).

Polar residues predominate over residues 1–16 (MGQDTDMLNTYQQLVR). Disordered stretches follow at residues 1-31 (MGQD…LQAP), 50-102 (GCLG…LLPR), 123-155 (LQPS…ANLP), and 179-309 (GGVS…QWRK). Polar residues predominate over residues 208-219 (GSASDKQVQLQS). Residues 244–258 (SEEEQFSEATEEAEE) show a composition bias toward acidic residues. A compositionally biased stretch (polar residues) spans 289-301 (QGQSQGSSPSFNN). The stretch at 379–464 (RQEATRSLLQ…LQGIQHRVQA (86 aa)) forms a coiled coil. A disordered region spans residues 503-556 (AGKVDREGTPRKPRSHRSMGVRMEHSPQRPPRTEPTGSQPDRHYNPSLDPECSP).

The sequence is that of Testis-specific protein 10-interacting protein (TSGA10IP) from Homo sapiens (Human).